The primary structure comprises 481 residues: Guanine nucleotide exchange factor C9orf72 homolog (481 aa).

The uDENN C9ORF72-type domain maps to S23–S194. Residues D200 to T343 form the cDENN C9ORF72-type domain. A dDENN C9ORF72-type domain is found at V370–F464. Positions S461–F481 are required for the homodimerization of the C9orf72-SMCR8 complex.

In terms of assembly, component of the C9orf72-SMCR8 complex, at least composed of C9orf72, SMCR8 and WDR41. The complex is formed of two protomers, each individually consisting of one molecule each of C9orf72, SMCR8 and WDR41. The protomers homodimerize via an interaction between C9orf72 (via C-terminus) and SMCR8 (via N-terminus). Within each protomer SMCR8 (via DENN domain) acts as a bridging protein between WDR41 (via C-terminus and N-terminus) and C9orf72 (via C-terminus). The C9orf72-SMCR8 complex associates with the ULK1/ATG1 kinase complex. Interacts with ULK1/ATG1 kinase complex members ULK1, ATG13 and RB1CC1. Interacts with SMCR8; the interaction is direct. Interacts with HNRNPA1, HNRNPA2B1 and UBQLN2. Interacts with small Rab GTPase RAB1A; the interaction mediates recruitment of RAB1A to the ULK1/ATG1 kinase complex. Also interacts with small Rab GTPase RAB7A. Interacts with cofilin. Interacts with GTP-binding proteins ARF1 and ARF6. Interacts with the DLG4/PSD-95. Interacts with CARM1 (via PH domain-like fold). Interacts with RAB39A and RAB39B (in GDP-bound forms); functions as GEF for RAB39A and RAB39B.

The protein localises to the nucleus. Its subcellular location is the cytoplasm. It localises to the P-body. It is found in the stress granule. The protein resides in the endosome. The protein localises to the lysosome. Its subcellular location is the cytoplasmic vesicle. It localises to the autophagosome. It is found in the autolysosome. The protein resides in the secreted. The protein localises to the cell projection. Its subcellular location is the axon. It localises to the growth cone. It is found in the perikaryon. In terms of biological role, acts as a guanine-nucleotide releasing factor (GEF) for Rab GTPases by promoting the conversion of inactive RAB-GDP to the active form RAB-GTP. Acts as a GEF for RAB39A which enables HOPS-mediated autophagosome-lysosome membrane tethering and fusion in mammalian autophagy. Component of the C9orf72-SMCR8 complex where both subunits display GEF activity and that regulates autophagy. As part of the C9orf72-SMCR8-WDR41 (CSW) complex, functions as GEF for RAB8A and RAB39B, thereby promoting autophagosome maturation. As part of the C9orf72-SMCR8 complex, also functions as GTPase activating protein (GAP) for RAB8A and RAB11A in vitro. The C9orf72-SMCR8 complex also acts as a regulator of autophagy initiation by interacting with the ULK1/ATG1 kinase complex and modulating its protein kinase activity. Promotes initiation of autophagy by regulating the RAB1A-dependent trafficking of the ULK1/ATG1 kinase complex to the phagophore which leads to autophagosome formation. Acts as a regulator of mTORC1 signaling by promoting phosphorylation of mTORC1 substrates. Plays a role in endosomal trafficking. May be involved in regulating the maturation of phagosomes to lysosomes. Promotes the lysosomal localization and lysosome-mediated degradation of CARM1 which leads to inhibition of starvation-induced lipid metabolism. Regulates actin dynamics in motor neurons by inhibiting the GTP-binding activity of ARF6, leading to ARF6 inactivation. This reduces the activity of the LIMK1 and LIMK2 kinases which are responsible for phosphorylation and inactivation of cofilin, leading to CFL1/cofilin activation. Positively regulates axon extension and axon growth cone size in spinal motor neurons. Required for SMCR8 protein expression and localization at pre- and post-synaptic compartments in the forebrain, also regulates protein abundance of RAB3A and GRIA1/GLUR1 in post-synaptic compartments in the forebrain and hippocampus. Plays a role within the hematopoietic system in restricting inflammation and the development of autoimmunity. The chain is Guanine nucleotide exchange factor C9orf72 homolog from Rattus norvegicus (Rat).